The sequence spans 203 residues: ATP-dependent Clp protease proteolytic subunit (203 aa).

The active-site Nucleophile is the Ser107. His132 is an active-site residue.

The protein belongs to the peptidase S14 family. As to quaternary structure, fourteen ClpP subunits assemble into 2 heptameric rings which stack back to back to give a disk-like structure with a central cavity, resembling the structure of eukaryotic proteasomes.

It localises to the cytoplasm. The enzyme catalyses Hydrolysis of proteins to small peptides in the presence of ATP and magnesium. alpha-casein is the usual test substrate. In the absence of ATP, only oligopeptides shorter than five residues are hydrolyzed (such as succinyl-Leu-Tyr-|-NHMec, and Leu-Tyr-Leu-|-Tyr-Trp, in which cleavage of the -Tyr-|-Leu- and -Tyr-|-Trp bonds also occurs).. Functionally, cleaves peptides in various proteins in a process that requires ATP hydrolysis. Has a chymotrypsin-like activity. Plays a major role in the degradation of misfolded proteins. The protein is ATP-dependent Clp protease proteolytic subunit of Shewanella woodyi (strain ATCC 51908 / MS32).